Reading from the N-terminus, the 432-residue chain is Tubulin-specific chaperone cofactor E-like protein (432 aa).

LRR repeat units follow at residues alanine 69 to asparagine 94, leucine 95 to proline 117, valine 118 to leucine 140, leucine 143 to serine 167, threonine 168 to lysine 191, phenylalanine 193 to glutamine 217, and leucine 218 to arginine 242. Positions isoleucine 254 to phenylalanine 295 are LRRCT. A ubiquitin-like (UBL) region spans residues valine 324–isoleucine 415.

The protein localises to the cytoplasm. Its subcellular location is the cytoskeleton. Acts as a regulator of tubulin stability. Involved in microtubule-dependent neuronal function. May be involved in tubulin acetylation/deacetylation pathway. This Caenorhabditis elegans protein is Tubulin-specific chaperone cofactor E-like protein.